The chain runs to 292 residues: Ribosomal protein L11 methyltransferase (292 aa).

S-adenosyl-L-methionine contacts are provided by Thr136, Gly159, Asp181, and Asn228.

Belongs to the methyltransferase superfamily. PrmA family.

The protein localises to the cytoplasm. The enzyme catalyses L-lysyl-[protein] + 3 S-adenosyl-L-methionine = N(6),N(6),N(6)-trimethyl-L-lysyl-[protein] + 3 S-adenosyl-L-homocysteine + 3 H(+). In terms of biological role, methylates ribosomal protein L11. This chain is Ribosomal protein L11 methyltransferase, found in Rhizobium johnstonii (strain DSM 114642 / LMG 32736 / 3841) (Rhizobium leguminosarum bv. viciae).